The following is a 109-amino-acid chain: Large ribosomal subunit protein uL22 (109 aa).

Belongs to the universal ribosomal protein uL22 family. Part of the 50S ribosomal subunit.

In terms of biological role, this protein binds specifically to 23S rRNA; its binding is stimulated by other ribosomal proteins, e.g. L4, L17, and L20. It is important during the early stages of 50S assembly. It makes multiple contacts with different domains of the 23S rRNA in the assembled 50S subunit and ribosome. Its function is as follows. The globular domain of the protein is located near the polypeptide exit tunnel on the outside of the subunit, while an extended beta-hairpin is found that lines the wall of the exit tunnel in the center of the 70S ribosome. The polypeptide is Large ribosomal subunit protein uL22 (Dehalococcoides mccartyi (strain ATCC BAA-2100 / JCM 16839 / KCTC 5957 / BAV1)).